A 1188-amino-acid chain; its full sequence is Probable phosphoenolpyruvate synthase (1188 aa).

Residues 536–670 enclose the DOD-type homing endonuclease domain; it reads LGGAVLSDGH…LIVGLYRLGI (135 aa). The active-site Tele-phosphohistidine intermediate is H824. Substrate-binding residues include R917, R964, E1061, G1083, T1084, N1085, and D1086. E1061 lines the Mg(2+) pocket. Residue D1086 coordinates Mg(2+). C1133 (proton donor) is an active-site residue.

Belongs to the PEP-utilizing enzyme family. Requires Mg(2+) as cofactor. Post-translationally, this protein undergoes a protein self splicing that involves a post-translational excision of the intervening region (intein) followed by peptide ligation.

The catalysed reaction is pyruvate + ATP + H2O = phosphoenolpyruvate + AMP + phosphate + 2 H(+). Its pathway is carbohydrate biosynthesis; gluconeogenesis. Its function is as follows. Catalyzes the phosphorylation of pyruvate to phosphoenolpyruvate. In Methanocaldococcus jannaschii (strain ATCC 43067 / DSM 2661 / JAL-1 / JCM 10045 / NBRC 100440) (Methanococcus jannaschii), this protein is Probable phosphoenolpyruvate synthase (ppsA).